The following is a 339-amino-acid chain: Histidine protein methyltransferase 1 (339 aa).

S333 and S338 each carry phosphoserine.

It belongs to the methyltransferase superfamily. METTL18 family.

The protein resides in the cytoplasm. It localises to the nucleus. It carries out the reaction L-histidyl-[protein] + S-adenosyl-L-methionine = N(tele)-methyl-L-histidyl-[protein] + S-adenosyl-L-homocysteine + H(+). Functionally, protein-histidine N-methyltransferase that mediates methylation of target protein on His residues. The sequence is that of Histidine protein methyltransferase 1 from Schizosaccharomyces pombe (strain 972 / ATCC 24843) (Fission yeast).